The sequence spans 319 residues: 12-(S)-hydroxy-5,8,10,14-eicosatetraenoic acid receptor (319 aa).

At 1 to 16 (MPFPNCSAPSTVVATA) the chain is on the extracellular side. Asparagine 5 carries N-linked (GlcNAc...) asparagine glycosylation. A helical membrane pass occupies residues 17–37 (VGVLLGLECGLGLLGNAVALW). At 38–52 (TFLFRVRVWKPYAVY) the chain is on the cytoplasmic side. The chain crosses the membrane as a helical span at residues 53 to 73 (LLNLALADLLLAACLPFLAAF). Residues 74–91 (YLSLQAWHLGRVGCWALH) are Extracellular-facing. The chain crosses the membrane as a helical span at residues 92–110 (FLLDLSRSVGMAFLAAVAL). Residues 111–131 (DRYLRVVHPRLKVNLLSPQAA) lie on the Cytoplasmic side of the membrane. Residues 132–152 (LGVSGLVWLLMVALTCPGLLI) form a helical membrane-spanning segment. The Extracellular segment spans residues 153–180 (SEAAQNSTRCHSFYSRADGSFSIIWQEA). The chain crosses the membrane as a helical span at residues 181-201 (LSCLQFVLPFGLIVFCNAGII). Over 202 to 219 (RALQKRLREPEKQPKLQR) the chain is Cytoplasmic. The helical transmembrane segment at 220-240 (AQALVTLVVVLFALCFLPCFL) threads the bilayer. The Extracellular segment spans residues 241-265 (ARVLMHIFQNLGSCRALCAVAHTSD). A helical transmembrane segment spans residues 266–284 (VTGSLTYLHSVLNPVVYCF). Residues 285-319 (SSPTFRSSYRRVFHTLRGKGQAAEPPDFNPRDSYS) lie on the Cytoplasmic side of the membrane.

This sequence belongs to the G-protein coupled receptor 1 family. As to quaternary structure, interacts with KRAS; in a farnesylation-dependent manner.

It localises to the cell membrane. High-affinity receptor for 12-(S)-hydroxy-5,8,10,14-eicosatetraenoic acid (12-S-HETE), with much lower affinities for other HETE isomers. 12-S-HETE is a eicosanoid, a 12-lipoxygenase (ALOX12) metabolite of arachidonic acid, involved in many physiologic and pathologic processes. 12-S-HETE-binding leads to activation of ERK1/2 (MAPK3/MAPK1), MEK, and NF-kappa-B pathways leading to cell growth. Plays a crucial role for proliferation, survival and macropinocytosis of KRAS-dependent cancer cells by mediating the translocation of KRAS from the endoplasmic reticulum to the plasma membrane (PM) and its association with the PM. Contributes to enhanced immune responses by inducing dendrite protrusion of small intestinal CX3CR1(+) phagocytes for the uptake of luminal antigens. Acts also as a key receptor for 12-(S)-HETE-mediated liver ischemia reperfusion injury. In terms of biological role, proton-sensing G protein-coupled receptor. The polypeptide is 12-(S)-hydroxy-5,8,10,14-eicosatetraenoic acid receptor (GPR31) (Homo sapiens (Human)).